The primary structure comprises 361 residues: Peptide chain release factor 1 (361 aa).

Gln237 is modified (N5-methylglutamine). The segment covering 287 to 297 (KQQKEQSDTRK) has biased composition (basic and acidic residues). Positions 287–313 (KQQKEQSDTRKSLVGSGDRSERIRTYN) are disordered.

This sequence belongs to the prokaryotic/mitochondrial release factor family. Methylated by PrmC. Methylation increases the termination efficiency of RF1.

It is found in the cytoplasm. Peptide chain release factor 1 directs the termination of translation in response to the peptide chain termination codons UAG and UAA. This chain is Peptide chain release factor 1, found in Francisella tularensis subsp. holarctica (strain FTNF002-00 / FTA).